The following is a 256-amino-acid chain: Imidazole glycerol phosphate synthase subunit HisF (256 aa).

Catalysis depends on residues Asp-11 and Asp-130.

Belongs to the HisA/HisF family. As to quaternary structure, heterodimer of HisH and HisF.

The protein localises to the cytoplasm. The enzyme catalyses 5-[(5-phospho-1-deoxy-D-ribulos-1-ylimino)methylamino]-1-(5-phospho-beta-D-ribosyl)imidazole-4-carboxamide + L-glutamine = D-erythro-1-(imidazol-4-yl)glycerol 3-phosphate + 5-amino-1-(5-phospho-beta-D-ribosyl)imidazole-4-carboxamide + L-glutamate + H(+). The protein operates within amino-acid biosynthesis; L-histidine biosynthesis; L-histidine from 5-phospho-alpha-D-ribose 1-diphosphate: step 5/9. In terms of biological role, IGPS catalyzes the conversion of PRFAR and glutamine to IGP, AICAR and glutamate. The HisF subunit catalyzes the cyclization activity that produces IGP and AICAR from PRFAR using the ammonia provided by the HisH subunit. The sequence is that of Imidazole glycerol phosphate synthase subunit HisF from Prochlorococcus marinus (strain NATL2A).